A 365-amino-acid chain; its full sequence is 2-aminoethylphosphonate--pyruvate transaminase (365 aa).

Lysine 194 is modified (N6-(pyridoxal phosphate)lysine).

Belongs to the class-V pyridoxal-phosphate-dependent aminotransferase family. PhnW subfamily. As to quaternary structure, homodimer. Requires pyridoxal 5'-phosphate as cofactor.

It carries out the reaction (2-aminoethyl)phosphonate + pyruvate = phosphonoacetaldehyde + L-alanine. Its function is as follows. Involved in phosphonate degradation. The protein is 2-aminoethylphosphonate--pyruvate transaminase of Bacillus cytotoxicus (strain DSM 22905 / CIP 110041 / 391-98 / NVH 391-98).